We begin with the raw amino-acid sequence, 492 residues long: Probable beta-1,4-xylosyltransferase IRX14H (492 aa).

Over 1–33 (MKLSVFRLSYWNRRGSSFRSSPSLDPSFDGKSP) the chain is Cytoplasmic. A helical; Signal-anchor for type II membrane protein transmembrane segment spans residues 34–54 (SSVFWFVIHGLCCLISLILGF). The Lumenal portion of the chain corresponds to 55–492 (RFSHLVLFFL…FDGVKVSATS (438 aa)). Residues Asn99, Asn196, and Asn314 are each glycosylated (N-linked (GlcNAc...) asparagine). Positions 457–492 (IKEAKSNSKPRVSKSKSYKEKQEPKAFDGVKVSATS) are disordered. Residues 473-484 (SYKEKQEPKAFD) show a composition bias toward basic and acidic residues.

Belongs to the glycosyltransferase 43 family. As to expression, expressed in developing interfascicular fibers and xylem cells in stems and developing secondary xylem in roots.

It is found in the golgi apparatus membrane. Involved in the synthesis of the hemicellulose glucuronoxylan, a major component of secondary cell walls. Probably involved in the elongation of glucuronoxylan xylosyl backbone. This is Probable beta-1,4-xylosyltransferase IRX14H (IRX14H) from Arabidopsis thaliana (Mouse-ear cress).